The sequence spans 88 residues: Small ribosomal subunit protein uS15 (88 aa).

Belongs to the universal ribosomal protein uS15 family. As to quaternary structure, part of the 30S ribosomal subunit. Forms a bridge to the 50S subunit in the 70S ribosome, contacting the 23S rRNA.

One of the primary rRNA binding proteins, it binds directly to 16S rRNA where it helps nucleate assembly of the platform of the 30S subunit by binding and bridging several RNA helices of the 16S rRNA. Functionally, forms an intersubunit bridge (bridge B4) with the 23S rRNA of the 50S subunit in the ribosome. The sequence is that of Small ribosomal subunit protein uS15 from Geobacter sp. (strain M21).